Here is a 108-residue protein sequence, read N- to C-terminus: Small ribosomal subunit protein bS6 (108 aa).

Belongs to the bacterial ribosomal protein bS6 family.

In terms of biological role, binds together with bS18 to 16S ribosomal RNA. In Dichelobacter nodosus (strain VCS1703A), this protein is Small ribosomal subunit protein bS6.